The following is an 87-amino-acid chain: Cell division topological specificity factor (87 aa).

This sequence belongs to the MinE family.

Functionally, prevents the cell division inhibition by proteins MinC and MinD at internal division sites while permitting inhibition at polar sites. This ensures cell division at the proper site by restricting the formation of a division septum at the midpoint of the long axis of the cell. The polypeptide is Cell division topological specificity factor (Delftia acidovorans (strain DSM 14801 / SPH-1)).